Here is a 593-residue protein sequence, read N- to C-terminus: NADH-quinone oxidoreductase subunit C/D (593 aa).

The segment at 1 to 184 (MTADNAIFIP…DPYSLTLAKQ (184 aa)) is NADH dehydrogenase I subunit C. Positions 208 to 593 (DYMFLNLGPN…IDFVMADVDR (386 aa)) are NADH dehydrogenase I subunit D.

The protein in the N-terminal section; belongs to the complex I 30 kDa subunit family. In the C-terminal section; belongs to the complex I 49 kDa subunit family. NDH-1 is composed of 13 different subunits. Subunits NuoB, CD, E, F, and G constitute the peripheral sector of the complex.

It localises to the cell inner membrane. It carries out the reaction a quinone + NADH + 5 H(+)(in) = a quinol + NAD(+) + 4 H(+)(out). Functionally, NDH-1 shuttles electrons from NADH, via FMN and iron-sulfur (Fe-S) centers, to quinones in the respiratory chain. The immediate electron acceptor for the enzyme in this species is believed to be ubiquinone. Couples the redox reaction to proton translocation (for every two electrons transferred, four hydrogen ions are translocated across the cytoplasmic membrane), and thus conserves the redox energy in a proton gradient. This is NADH-quinone oxidoreductase subunit C/D from Pseudomonas putida (strain ATCC 47054 / DSM 6125 / CFBP 8728 / NCIMB 11950 / KT2440).